Here is a 396-residue protein sequence, read N- to C-terminus: 1-deoxy-D-xylulose 5-phosphate reductoisomerase (396 aa).

NADPH contacts are provided by Thr-10, Gly-11, Ser-12, Ile-13, Asn-38, and Asn-123. Lys-124 is a binding site for 1-deoxy-D-xylulose 5-phosphate. NADPH is bound at residue Glu-125. Asp-149 is a binding site for Mn(2+). Residues Ser-150, Glu-151, Ser-185, and His-208 each coordinate 1-deoxy-D-xylulose 5-phosphate. Glu-151 contributes to the Mn(2+) binding site. Gly-214 is a binding site for NADPH. Ser-221, Asn-226, Lys-227, and Glu-230 together coordinate 1-deoxy-D-xylulose 5-phosphate. Position 230 (Glu-230) interacts with Mn(2+).

This sequence belongs to the DXR family. Requires Mg(2+) as cofactor. It depends on Mn(2+) as a cofactor.

It carries out the reaction 2-C-methyl-D-erythritol 4-phosphate + NADP(+) = 1-deoxy-D-xylulose 5-phosphate + NADPH + H(+). Its pathway is isoprenoid biosynthesis; isopentenyl diphosphate biosynthesis via DXP pathway; isopentenyl diphosphate from 1-deoxy-D-xylulose 5-phosphate: step 1/6. Functionally, catalyzes the NADPH-dependent rearrangement and reduction of 1-deoxy-D-xylulose-5-phosphate (DXP) to 2-C-methyl-D-erythritol 4-phosphate (MEP). The chain is 1-deoxy-D-xylulose 5-phosphate reductoisomerase from Shewanella pealeana (strain ATCC 700345 / ANG-SQ1).